A 105-amino-acid polypeptide reads, in one-letter code: Small ribosomal subunit protein uS10 (105 aa).

It belongs to the universal ribosomal protein uS10 family. As to quaternary structure, part of the 30S ribosomal subunit.

Its function is as follows. Involved in the binding of tRNA to the ribosomes. This is Small ribosomal subunit protein uS10 from Oleidesulfovibrio alaskensis (strain ATCC BAA-1058 / DSM 17464 / G20) (Desulfovibrio alaskensis).